The following is a 380-amino-acid chain: MTIIRKKHPLIKIINHSFIDLPTPSNISSWWNFGSLLGLCLIIQILTGLFLAMHYTSDTTTAFSSVAHICRDVNYGWLIRYMHANGASMFFICLFLHVGRGVYYGSYNMIETWNMGIMLLFTVMATAFMGYVLPWGQMSFWGATVITNLLSAIPYIGSTLVEWIWGGFSVDKATLTRFFAFHFILPFIITALVLVHLLFLHETGSNNPTGLNSDADKIPFHPYYTIKDFLGILILLMASMILTLFFPDILGDPDNFTPANPLNTPPHIKPEWYFLFAYAILRSIPNKLGGVLALILSILILAFMPLLHTSKQRALTFRPITQIMYWTLVADLLILTWIGGQPVEYPFITIGQTASIAYFAIILIFMPITGMIENNILDLD.

A run of 4 helical transmembrane segments spans residues F33–M53, W77–V98, W113–L133, and F178–L198. Positions 83 and 97 each coordinate heme b. H182 and H196 together coordinate heme b. H201 provides a ligand contact to a ubiquinone. The next 4 membrane-spanning stretches (helical) occupy residues I226–F246, L288–H308, I320–G340, and F347–P367.

It belongs to the cytochrome b family. As to quaternary structure, the cytochrome bc1 complex contains 11 subunits: 3 respiratory subunits (MT-CYB, CYC1 and UQCRFS1), 2 core proteins (UQCRC1 and UQCRC2) and 6 low-molecular weight proteins (UQCRH/QCR6, UQCRB/QCR7, UQCRQ/QCR8, UQCR10/QCR9, UQCR11/QCR10 and a cleavage product of UQCRFS1). This cytochrome bc1 complex then forms a dimer. It depends on heme b as a cofactor.

Its subcellular location is the mitochondrion inner membrane. Functionally, component of the ubiquinol-cytochrome c reductase complex (complex III or cytochrome b-c1 complex) that is part of the mitochondrial respiratory chain. The b-c1 complex mediates electron transfer from ubiquinol to cytochrome c. Contributes to the generation of a proton gradient across the mitochondrial membrane that is then used for ATP synthesis. The sequence is that of Cytochrome b (MT-CYB) from Microtus oregoni (Creeping vole).